We begin with the raw amino-acid sequence, 479 residues long: UDP-N-acetylmuramate--L-alanine ligase (479 aa).

128-134 serves as a coordination point for ATP; that stretch reads GAHGKTT.

It belongs to the MurCDEF family.

The protein resides in the cytoplasm. The enzyme catalyses UDP-N-acetyl-alpha-D-muramate + L-alanine + ATP = UDP-N-acetyl-alpha-D-muramoyl-L-alanine + ADP + phosphate + H(+). It functions in the pathway cell wall biogenesis; peptidoglycan biosynthesis. Cell wall formation. This is UDP-N-acetylmuramate--L-alanine ligase from Psychrobacter arcticus (strain DSM 17307 / VKM B-2377 / 273-4).